The sequence spans 431 residues: uncharacterized protein (431 aa).

Helical transmembrane passes span 228–248 (GLLS…HYLS), 279–299 (IGLP…NFTF), 349–369 (ILWP…FLWI), and 388–408 (MIFN…LKLY).

The protein resides in the membrane. This is an uncharacterized protein from Saccharomyces cerevisiae (strain ATCC 204508 / S288c) (Baker's yeast).